The sequence spans 434 residues: Trigger factor (434 aa).

The PPIase FKBP-type domain occupies Gly-160–Pro-245.

The protein belongs to the FKBP-type PPIase family. Tig subfamily.

It is found in the cytoplasm. It carries out the reaction [protein]-peptidylproline (omega=180) = [protein]-peptidylproline (omega=0). Its function is as follows. Involved in protein export. Acts as a chaperone by maintaining the newly synthesized protein in an open conformation. Functions as a peptidyl-prolyl cis-trans isomerase. This chain is Trigger factor, found in Shewanella denitrificans (strain OS217 / ATCC BAA-1090 / DSM 15013).